The primary structure comprises 159 residues: Large ribosomal subunit protein uL10 (159 aa).

It belongs to the universal ribosomal protein uL10 family. Part of the ribosomal stalk of the 50S ribosomal subunit. The N-terminus interacts with L11 and the large rRNA to form the base of the stalk. The C-terminus forms an elongated spine to which L12 dimers bind in a sequential fashion forming a multimeric L10(L12)X complex.

Forms part of the ribosomal stalk, playing a central role in the interaction of the ribosome with GTP-bound translation factors. The chain is Large ribosomal subunit protein uL10 from Campylobacter jejuni (strain RM1221).